We begin with the raw amino-acid sequence, 240 residues long: Transcription factor bHLH47 (240 aa).

The span at 1-13 (MVSKTPSTSSDEA) shows a compositional bias: polar residues. The interval 1–26 (MVSKTPSTSSDEANATADERCRKGKV) is disordered. In terms of domain architecture, bHLH spans 27 to 77 (PKRINKAVRERLKREHLNELFIELADTLELNQQNSGKASILCEATRFLKDV). Residues 98-131 (VTTEKNELKEETSVLETEISKLQNEIEARANQSK) are a coiled coil. The span at 128–138 (NQSKPDLNTSP) shows a compositional bias: polar residues. Residues 128–153 (NQSKPDLNTSPAPEYHHHHYQQQHPE) form a disordered region.

Homodimer. Forms heterodimer with PYEL proteins bHLH115, bHLH104 and ILR3. As to expression, expressed constitutively in roots, leaves, stems, and flowers.

The protein localises to the nucleus. This is Transcription factor bHLH47 (BHLH47) from Arabidopsis thaliana (Mouse-ear cress).